The following is a 184-amino-acid chain: Holliday junction branch migration complex subunit RuvA (184 aa).

The tract at residues 1 to 64 is domain I; the sequence is MIKAIEGIIT…EDANLLYGFI (64 aa). The segment at 65-137 is domain II; that stretch reads KESEQRIFEM…LSDAKFGEIN (73 aa). A region of interest (flexible linker) is located at residue Asn-137. Residues 138–184 are domain III; sequence SMPSYQNEAFMALESLGFKRDRISKVLNECSSNDTASLIKEALKKLA.

This sequence belongs to the RuvA family. In terms of assembly, homotetramer. Forms an RuvA(8)-RuvB(12)-Holliday junction (HJ) complex. HJ DNA is sandwiched between 2 RuvA tetramers; dsDNA enters through RuvA and exits via RuvB. An RuvB hexamer assembles on each DNA strand where it exits the tetramer. Each RuvB hexamer is contacted by two RuvA subunits (via domain III) on 2 adjacent RuvB subunits; this complex drives branch migration. In the full resolvosome a probable DNA-RuvA(4)-RuvB(12)-RuvC(2) complex forms which resolves the HJ.

The protein localises to the cytoplasm. The RuvA-RuvB-RuvC complex processes Holliday junction (HJ) DNA during genetic recombination and DNA repair, while the RuvA-RuvB complex plays an important role in the rescue of blocked DNA replication forks via replication fork reversal (RFR). RuvA specifically binds to HJ cruciform DNA, conferring on it an open structure. The RuvB hexamer acts as an ATP-dependent pump, pulling dsDNA into and through the RuvAB complex. HJ branch migration allows RuvC to scan DNA until it finds its consensus sequence, where it cleaves and resolves the cruciform DNA. The protein is Holliday junction branch migration complex subunit RuvA of Campylobacter fetus subsp. fetus (strain 82-40).